Here is a 675-residue protein sequence, read N- to C-terminus: DNA gyrase subunit B (675 aa).

The Toprim domain maps to 453–567 (SELYVVEGDS…NGHIFLAQPP (115 aa)). Mg(2+) is bound by residues Glu459, Asp532, and Asp534.

This sequence belongs to the type II topoisomerase GyrB family. Heterotetramer, composed of two GyrA and two GyrB chains. In the heterotetramer, GyrA contains the active site tyrosine that forms a transient covalent intermediate with DNA, while GyrB binds cofactors and catalyzes ATP hydrolysis. Mg(2+) is required as a cofactor. Requires Mn(2+) as cofactor. The cofactor is Ca(2+).

It localises to the cytoplasm. The catalysed reaction is ATP-dependent breakage, passage and rejoining of double-stranded DNA.. Inhibited by 4-quinoline drugs (nalidixic acid, ciprofloxacin, ofloxacin), although it is much less sensitive than the corresponding enzyme from E.coli. GyrB intrinsic ATPase activity inhibited by aminopyrazinamide and pyrrolamide derivatives. Functionally, a type II topoisomerase that negatively supercoils closed circular double-stranded (ds) DNA in an ATP-dependent manner to modulate DNA topology and maintain chromosomes in an underwound state. Negative supercoiling favors strand separation, and DNA replication, transcription, recombination and repair, all of which involve strand separation. Also able to catalyze the interconversion of other topological isomers of dsDNA rings, including catenanes and knotted rings. Type II topoisomerases break and join 2 DNA strands simultaneously in an ATP-dependent manner. This chain is DNA gyrase subunit B, found in Mycolicibacterium smegmatis (strain ATCC 700084 / mc(2)155) (Mycobacterium smegmatis).